The chain runs to 368 residues: tRNA-specific 2-thiouridylase MnmA (368 aa).

Residues 12–19 (GMSGGVDS) and Met38 contribute to the ATP site. The tract at residues 98–100 (NPD) is interaction with target base in tRNA. Cys103 (nucleophile) is an active-site residue. Cysteines 103 and 200 form a disulfide. Gly128 is an ATP binding site. Positions 150–152 (KDQ) are interaction with tRNA. Residue Cys200 is the Cysteine persulfide intermediate of the active site. Residues 313–314 (RY) are interaction with tRNA.

The protein belongs to the MnmA/TRMU family. As to quaternary structure, interacts with TusE.

The protein resides in the cytoplasm. The enzyme catalyses S-sulfanyl-L-cysteinyl-[protein] + uridine(34) in tRNA + AH2 + ATP = 2-thiouridine(34) in tRNA + L-cysteinyl-[protein] + A + AMP + diphosphate + H(+). Its function is as follows. Catalyzes the 2-thiolation of uridine at the wobble position (U34) of tRNA(Lys), tRNA(Glu) and tRNA(Gln), leading to the formation of s(2)U34, the first step of tRNA-mnm(5)s(2)U34 synthesis. Sulfur is provided by IscS, via a sulfur-relay system. Binds ATP and its substrate tRNAs. The chain is tRNA-specific 2-thiouridylase MnmA from Pectobacterium atrosepticum (strain SCRI 1043 / ATCC BAA-672) (Erwinia carotovora subsp. atroseptica).